Reading from the N-terminus, the 205-residue chain is GTP cyclohydrolase 1 (205 aa).

The Zn(2+) site is built by Cys-94, His-97, and Cys-165.

The protein belongs to the GTP cyclohydrolase I family. As to quaternary structure, homomer.

The catalysed reaction is GTP + H2O = 7,8-dihydroneopterin 3'-triphosphate + formate + H(+). It participates in cofactor biosynthesis; 7,8-dihydroneopterin triphosphate biosynthesis; 7,8-dihydroneopterin triphosphate from GTP: step 1/1. The polypeptide is GTP cyclohydrolase 1 (Sinorhizobium fredii (strain NBRC 101917 / NGR234)).